A 1513-amino-acid chain; its full sequence is DNA-directed RNA polymerase subunit beta'' (1513 aa).

Zn(2+)-binding residues include C220, C296, C303, and C306. The disordered stretch occupies residues 644–769 (RTREKDSENE…EYGNPEEDSV (126 aa)). Residues 659–679 (NEYRTREEECKTLEDEYRTRE) are compositionally biased toward basic and acidic residues. Over residues 680–707 (EEYETLEDEYGIPENEYETLEDEYGILE) the composition is skewed to acidic residues. Positions 726-737 (NKYRPREDKYGT) are enriched in basic and acidic residues. Residues 738–767 (LEEDSEDEHGTLEEDSEEDSEDEYGNPEED) show a composition bias toward acidic residues.

Belongs to the RNA polymerase beta' chain family. RpoC2 subfamily. As to quaternary structure, in plastids the minimal PEP RNA polymerase catalytic core is composed of four subunits: alpha, beta, beta', and beta''. When a (nuclear-encoded) sigma factor is associated with the core the holoenzyme is formed, which can initiate transcription. Zn(2+) is required as a cofactor.

Its subcellular location is the plastid. The protein resides in the chloroplast. The enzyme catalyses RNA(n) + a ribonucleoside 5'-triphosphate = RNA(n+1) + diphosphate. In terms of biological role, DNA-dependent RNA polymerase catalyzes the transcription of DNA into RNA using the four ribonucleoside triphosphates as substrates. The sequence is that of DNA-directed RNA polymerase subunit beta'' from Oryza nivara (Indian wild rice).